We begin with the raw amino-acid sequence, 341 residues long: Killer cell immunoglobulin-like receptor 2DL3 (341 aa).

Positions 1–21 (MSLMVVSMVCVGFFLLQGAWP) are cleaved as a signal peptide. Residues 22–245 (HEGVHRKPSL…SETGNPRHLH (224 aa)) are Extracellular-facing. 2 consecutive Ig-like C2-type domains span residues 42 to 107 (EETV…VTHS) and 142 to 205 (GESV…FRDS). 2 disulfide bridges follow: cysteine 49–cysteine 100 and cysteine 149–cysteine 198. N-linked (GlcNAc...) asparagine glycosylation is found at asparagine 84, asparagine 178, and asparagine 211. The tract at residues 220–239 (VTGNPSNSWPSPTEPSSETG) is disordered. Over residues 223-239 (NPSNSWPSPTEPSSETG) the composition is skewed to low complexity. The chain crosses the membrane as a helical span at residues 246 to 265 (VLIGTSVVIILFILLLFFLL). Residues 266–341 (HRWCCNKKNA…VYTELPNAEP (76 aa)) are Cytoplasmic-facing.

The protein belongs to the immunoglobulin superfamily. In terms of assembly, interacts with ARRB2.

It is found in the cell membrane. In terms of biological role, receptor on natural killer (NK) cells for HLA-C alleles (HLA-Cw1, HLA-Cw3 and HLA-Cw7). Inhibits the activity of NK cells thus preventing cell lysis. This chain is Killer cell immunoglobulin-like receptor 2DL3, found in Homo sapiens (Human).